Consider the following 452-residue polypeptide: LIM/homeobox protein lim-7 (452 aa).

LIM zinc-binding domains follow at residues 54–116 (AVCA…LFTT) and 117–179 (RCSR…LDNP). The interval 184-268 (SVPDYSKLNN…KKKDKQATRV (85 aa)) is disordered. Composition is skewed to low complexity over residues 192–205 (NNNNNNDNNNSSSN) and 217–227 (TLTSLDNNTSS). A DNA-binding region (homeobox) is located at residues 265 to 324 (ATRVRTVLNENQLKILRDCYSINSRPDATLKERLVEMTGLSARVIRVWFQNKRCKDKKRQ). The LIM interaction domain (LID) stretch occupies residues 347–376 (GIGPLMVQPATPHIDNTLGGPIDIQHFAQW).

Interacts (via LID domain) with ceh-14 (via LIM zinc-binding domains 1 and 2). As to expression, expressed in gonadal sheath cells, URA motoneurons, and 10 additional cells near the isthmus and terminal bulb of the pharynx. Expressed in the ALA and BDU cells.

It localises to the nucleus. In terms of biological role, probable DNA-binding transcriptional activator. This chain is LIM/homeobox protein lim-7, found in Caenorhabditis elegans.